A 130-amino-acid polypeptide reads, in one-letter code: Small ribosomal subunit protein uS8 (130 aa).

This sequence belongs to the universal ribosomal protein uS8 family. As to quaternary structure, part of the 30S ribosomal subunit. Contacts proteins S5 and S12.

One of the primary rRNA binding proteins, it binds directly to 16S rRNA central domain where it helps coordinate assembly of the platform of the 30S subunit. The polypeptide is Small ribosomal subunit protein uS8 (Vibrio cholerae serotype O1 (strain ATCC 39541 / Classical Ogawa 395 / O395)).